A 392-amino-acid chain; its full sequence is 8-amino-7-oxononanoate synthase (392 aa).

Arg-19 provides a ligand contact to substrate. Position 106–107 (106–107 (GY)) interacts with pyridoxal 5'-phosphate. His-131 contacts substrate. Pyridoxal 5'-phosphate-binding residues include Ser-176, His-204, and Thr-233. Lys-236 is subject to N6-(pyridoxal phosphate)lysine. Thr-350 serves as a coordination point for substrate.

Belongs to the class-II pyridoxal-phosphate-dependent aminotransferase family. BioF subfamily. In terms of assembly, homodimer. It depends on pyridoxal 5'-phosphate as a cofactor.

The catalysed reaction is 6-carboxyhexanoyl-[ACP] + L-alanine + H(+) = (8S)-8-amino-7-oxononanoate + holo-[ACP] + CO2. It participates in cofactor biosynthesis; biotin biosynthesis. Its function is as follows. Catalyzes the decarboxylative condensation of pimeloyl-[acyl-carrier protein] and L-alanine to produce 8-amino-7-oxononanoate (AON), [acyl-carrier protein], and carbon dioxide. The polypeptide is 8-amino-7-oxononanoate synthase (Stutzerimonas stutzeri (strain A1501) (Pseudomonas stutzeri)).